Consider the following 684-residue polypeptide: Glycine--tRNA ligase beta subunit (684 aa).

Belongs to the class-II aminoacyl-tRNA synthetase family. Tetramer of two alpha and two beta subunits.

Its subcellular location is the cytoplasm. It carries out the reaction tRNA(Gly) + glycine + ATP = glycyl-tRNA(Gly) + AMP + diphosphate. This chain is Glycine--tRNA ligase beta subunit, found in Pseudomonas fluorescens (strain SBW25).